A 514-amino-acid polypeptide reads, in one-letter code: 2-isopropylmalate synthase (514 aa).

A Pyruvate carboxyltransferase domain is found at 4–266 (INVFDTSLRD…KTGLKLSELK (263 aa)). D13, H201, H203, and N237 together coordinate Mn(2+). The tract at residues 390–514 (ELTALQVTYG…AKREMAKVES (125 aa)) is regulatory domain.

This sequence belongs to the alpha-IPM synthase/homocitrate synthase family. LeuA type 1 subfamily. Homodimer. Mn(2+) serves as cofactor.

The protein resides in the cytoplasm. The catalysed reaction is 3-methyl-2-oxobutanoate + acetyl-CoA + H2O = (2S)-2-isopropylmalate + CoA + H(+). It participates in amino-acid biosynthesis; L-leucine biosynthesis; L-leucine from 3-methyl-2-oxobutanoate: step 1/4. Its function is as follows. Catalyzes the condensation of the acetyl group of acetyl-CoA with 3-methyl-2-oxobutanoate (2-ketoisovalerate) to form 3-carboxy-3-hydroxy-4-methylpentanoate (2-isopropylmalate). This chain is 2-isopropylmalate synthase, found in Shouchella clausii (strain KSM-K16) (Alkalihalobacillus clausii).